A 170-amino-acid chain; its full sequence is Ribosome maturation factor RimM (170 aa).

One can recognise a PRC barrel domain in the interval 93–165 (PDEFHDHELI…RVVIDPPPGL (73 aa)).

The protein belongs to the RimM family. Binds ribosomal protein uS19.

It localises to the cytoplasm. Functionally, an accessory protein needed during the final step in the assembly of 30S ribosomal subunit, possibly for assembly of the head region. Essential for efficient processing of 16S rRNA. May be needed both before and after RbfA during the maturation of 16S rRNA. It has affinity for free ribosomal 30S subunits but not for 70S ribosomes. The polypeptide is Ribosome maturation factor RimM (Thermobifida fusca (strain YX)).